The sequence spans 334 residues: MEAAHFFEGTEKLLEVWFSRQQPDANQGSGDLRTIPRSEWDILLKDVQCSIISVTKTDKQEAYVLSESSMFVSKRRFILKTCGTTLLLKALVPLLKLARDYSGFDSIQSFFYSRKNFMKPSHQGYPHRNFQEEIEFLNAIFPNGAAYCMGRMNSDCWYLYTLDFPESRVINQPDQTLEILMSELDPAVMDQFYMKDGVTAKDVTRESGIRDLIPGSVIDATMFNPCGYSMNGMKSDGTYWTIHITPEPEFSYVSFETNLSQTSYDDLIRKVVEVFKPGKFVTTLFVNQSSKCRTVLSSPQKIEGFKRLDCQSALFNDYNFVFTSFAKKQQQQQS.

F7 is a substrate binding site. Residues E8 and E11 contribute to the active site. E67 is a substrate binding site. S68 acts as the Schiff-base intermediate with substrate; via pyruvic acid in catalysis. S68 bears the Pyruvic acid (Ser); by autocatalysis mark. The Proton donor; for catalytic activity role is filled by C82. F223 is a binding site for substrate. Catalysis depends on proton acceptor; for processing activity residues S229 and H243. E247 provides a ligand contact to substrate. Phosphoserine is present on S298.

Belongs to the eukaryotic AdoMetDC family. As to quaternary structure, heterotetramer of two alpha and two beta chains. Requires pyruvate as cofactor. Is synthesized initially as an inactive proenzyme. Formation of the active enzyme involves a self-maturation process in which the active site pyruvoyl group is generated from an internal serine residue via an autocatalytic post-translational modification. Two non-identical subunits are generated from the proenzyme in this reaction, and the pyruvate is formed at the N-terminus of the alpha chain, which is derived from the carboxyl end of the proenzyme. The post-translation cleavage follows an unusual pathway, termed non-hydrolytic serinolysis, in which the side chain hydroxyl group of the serine supplies its oxygen atom to form the C-terminus of the beta chain, while the remainder of the serine residue undergoes an oxidative deamination to produce ammonia and the pyruvoyl group blocking the N-terminus of the alpha chain.

It carries out the reaction S-adenosyl-L-methionine + H(+) = S-adenosyl 3-(methylsulfanyl)propylamine + CO2. Its pathway is amine and polyamine biosynthesis; S-adenosylmethioninamine biosynthesis; S-adenosylmethioninamine from S-adenosyl-L-methionine: step 1/1. Its function is as follows. Essential for biosynthesis of the polyamines spermidine and spermine. Promotes maintenance and self-renewal of embryonic stem cells, by maintaining spermine levels. This Bos taurus (Bovine) protein is S-adenosylmethionine decarboxylase proenzyme (AMD1).